The sequence spans 153 residues: Putative pre-16S rRNA nuclease (153 aa).

It belongs to the YqgF nuclease family.

The protein localises to the cytoplasm. Functionally, could be a nuclease involved in processing of the 5'-end of pre-16S rRNA. The chain is Putative pre-16S rRNA nuclease from Koribacter versatilis (strain Ellin345).